Consider the following 197-residue polypeptide: Probable GTP-binding protein EngB (197 aa).

Residues 22 to 195 form the EngB-type G domain; that stretch reads GFPEIGLAGR…WQWIEAHTVG (174 aa). GTP-binding positions include 30–37, 57–61, 75–78, 142–145, and 174–176; these read GRSNVGKS, GKTQT, DVPG, TKSD, and FSA. Ser-37 and Thr-59 together coordinate Mg(2+).

This sequence belongs to the TRAFAC class TrmE-Era-EngA-EngB-Septin-like GTPase superfamily. EngB GTPase family. Mg(2+) serves as cofactor.

In terms of biological role, necessary for normal cell division and for the maintenance of normal septation. The polypeptide is Probable GTP-binding protein EngB (Lactiplantibacillus plantarum (strain ATCC BAA-793 / NCIMB 8826 / WCFS1) (Lactobacillus plantarum)).